A 259-amino-acid polypeptide reads, in one-letter code: Ubiquitin-conjugating enzyme E2 J2 (259 aa).

Residues 1 to 226 are Cytoplasmic-facing; sequence MSSNSVKRAP…AGLQQANRHH (226 aa). Positions 12–162 constitute a UBC core domain; that stretch reads TATQRLKQDY…DKVFCELFPE (151 aa). Cys94 serves as the catalytic Glycyl thioester intermediate. A disordered region spans residues 174-200; that stretch reads QDELSSRPQALPLPDVVPDGETHHGQH. A helical; Anchor for type IV membrane protein transmembrane segment spans residues 227 to 247; sequence GLLGGALANLFVIVGFAAFAY. Topologically, residues 248–259 are lumenal; it reads TVKYVLRSIAQE.

It belongs to the ubiquitin-conjugating enzyme family.

Its subcellular location is the endoplasmic reticulum membrane. It catalyses the reaction S-ubiquitinyl-[E1 ubiquitin-activating enzyme]-L-cysteine + [E2 ubiquitin-conjugating enzyme]-L-cysteine = [E1 ubiquitin-activating enzyme]-L-cysteine + S-ubiquitinyl-[E2 ubiquitin-conjugating enzyme]-L-cysteine.. The protein operates within protein modification; protein ubiquitination. Catalyzes the covalent attachment of ubiquitin to other proteins. Seems to function in the selective degradation of misfolded membrane proteins from the endoplasmic reticulum (ERAD). In cooperation with the GATOR2 complex, catalyzes 'Lys-6'-linked ubiquitination of NPRL2. In Bos taurus (Bovine), this protein is Ubiquitin-conjugating enzyme E2 J2 (UBE2J2).